Reading from the N-terminus, the 276-residue chain is Acetyl-coenzyme A carboxylase carboxyl transferase subunit beta (276 aa).

In terms of domain architecture, CoA carboxyltransferase N-terminal spans Leu24–Lys276. 4 residues coordinate Zn(2+): Cys28, Cys31, Cys46, and Cys49. Residues Cys28–Cys49 form a C4-type zinc finger.

Belongs to the AccD/PCCB family. As to quaternary structure, acetyl-CoA carboxylase is a heterohexamer composed of biotin carboxyl carrier protein (AccB), biotin carboxylase (AccC) and two subunits each of ACCase subunit alpha (AccA) and ACCase subunit beta (AccD). Requires Zn(2+) as cofactor.

The protein localises to the cytoplasm. It carries out the reaction N(6)-carboxybiotinyl-L-lysyl-[protein] + acetyl-CoA = N(6)-biotinyl-L-lysyl-[protein] + malonyl-CoA. It functions in the pathway lipid metabolism; malonyl-CoA biosynthesis; malonyl-CoA from acetyl-CoA: step 1/1. Its function is as follows. Component of the acetyl coenzyme A carboxylase (ACC) complex. Biotin carboxylase (BC) catalyzes the carboxylation of biotin on its carrier protein (BCCP) and then the CO(2) group is transferred by the transcarboxylase to acetyl-CoA to form malonyl-CoA. This is Acetyl-coenzyme A carboxylase carboxyl transferase subunit beta from Pediococcus pentosaceus (strain ATCC 25745 / CCUG 21536 / LMG 10740 / 183-1w).